We begin with the raw amino-acid sequence, 413 residues long: Multifunctional CCA protein (413 aa).

Residues Gly-8 and Arg-11 each contribute to the ATP site. 2 residues coordinate CTP: Gly-8 and Arg-11. Residues Asp-21 and Asp-23 each coordinate Mg(2+). Residues Arg-91, Arg-137, and Arg-140 each contribute to the ATP site. Residues Arg-91, Arg-137, and Arg-140 each contribute to the CTP site. Residues 228–329 (TGVHTLMTLS…VKLFDAIDAW (102 aa)) form the HD domain.

It belongs to the tRNA nucleotidyltransferase/poly(A) polymerase family. Bacterial CCA-adding enzyme type 1 subfamily. In terms of assembly, monomer. Can also form homodimers and oligomers. Mg(2+) serves as cofactor. The cofactor is Ni(2+).

The catalysed reaction is a tRNA precursor + 2 CTP + ATP = a tRNA with a 3' CCA end + 3 diphosphate. The enzyme catalyses a tRNA with a 3' CCA end + 2 CTP + ATP = a tRNA with a 3' CCACCA end + 3 diphosphate. Functionally, catalyzes the addition and repair of the essential 3'-terminal CCA sequence in tRNAs without using a nucleic acid template. Adds these three nucleotides in the order of C, C, and A to the tRNA nucleotide-73, using CTP and ATP as substrates and producing inorganic pyrophosphate. tRNA 3'-terminal CCA addition is required both for tRNA processing and repair. Also involved in tRNA surveillance by mediating tandem CCA addition to generate a CCACCA at the 3' terminus of unstable tRNAs. While stable tRNAs receive only 3'-terminal CCA, unstable tRNAs are marked with CCACCA and rapidly degraded. This chain is Multifunctional CCA protein, found in Salmonella paratyphi A (strain ATCC 9150 / SARB42).